Consider the following 411-residue polypeptide: Lissencephaly-1 homolog (411 aa).

The region spanning 9–41 (QREELNQAIADYLGSNGYSSALEAFRKEADISG) is the LisH domain. Residues 56–83 (TSVIRLQKKVMELEAKLSEAEKEVIEGA) adopt a coiled-coil conformation. 7 WD repeats span residues 106 to 147 (GHRA…RSLK), 149 to 187 (HTSSVQDIAFDSQGKLLASCSADLSIKLWDFQQSYDCVK), 191 to 230 (GHDHNVSSVAFVPAGDYVLSASRDQTIKMWEVATGYCVKT), 233 to 272 (GHREWIRMVRVHMDGNIFASCSIDHSIRIWSINSRDCKAE), 275 to 334 (AHDH…CLFV), 337 to 376 (GHDNWVRELTFHPGGKYLVSASDDKTIRVWDLRNKRFMKT), and 379 to 411 (AHQHFCTSVDFHKKLPYVISGSVDNTVKVWECR).

Belongs to the WD repeat LIS1/nudF family.

The protein localises to the cytoplasm. It localises to the cytoskeleton. The protein resides in the microtubule organizing center. Its subcellular location is the centrosome. Positively regulates the activity of the minus-end directed microtubule motor protein dynein. May enhance dynein-mediated microtubule sliding by targeting dynein to the microtubule plus end. Required for several dynein- and microtubule-dependent processes. The sequence is that of Lissencephaly-1 homolog from Glossina morsitans morsitans (Savannah tsetse fly).